The primary structure comprises 259 residues: 14-3-3-like protein (259 aa).

The tract at residues 237-259 (DTTDDAEDEIREGSKQESGDGQQ) is disordered. Basic and acidic residues predominate over residues 247–259 (REGSKQESGDGQQ).

Belongs to the 14-3-3 family. In terms of tissue distribution, leaves specific.

The protein is 14-3-3-like protein of Solanum tuberosum (Potato).